The following is a 426-amino-acid chain: Gamma-glutamyl phosphate reductase (426 aa).

The protein belongs to the gamma-glutamyl phosphate reductase family.

It localises to the cytoplasm. The enzyme catalyses L-glutamate 5-semialdehyde + phosphate + NADP(+) = L-glutamyl 5-phosphate + NADPH + H(+). Its pathway is amino-acid biosynthesis; L-proline biosynthesis; L-glutamate 5-semialdehyde from L-glutamate: step 2/2. Catalyzes the NADPH-dependent reduction of L-glutamate 5-phosphate into L-glutamate 5-semialdehyde and phosphate. The product spontaneously undergoes cyclization to form 1-pyrroline-5-carboxylate. The sequence is that of Gamma-glutamyl phosphate reductase from Cupriavidus pinatubonensis (strain JMP 134 / LMG 1197) (Cupriavidus necator (strain JMP 134)).